The chain runs to 1563 residues: Ribulose bisphosphate carboxylase (1563 aa).

Residues histidine 32 and serine 79 each coordinate substrate. A propeptide spans 197–217 (LAAAFVGASTTRKASSVARRA) (linker). Asparagine 328 is a substrate binding site. The Proton acceptor role is filled by lysine 383. Lysine 385 provides a ligand contact to substrate. Mg(2+) contacts are provided by lysine 408, aspartate 410, and glutamate 411. Position 408 is an N6-carboxylysine (lysine 408). Histidine 504 (proton acceptor) is an active-site residue. Residues arginine 505, histidine 538, and serine 585 each contribute to the substrate site. The propeptide at 703 to 723 (LAAAFVGASTTRKASSVARRA) is linker. Asparagine 834 contacts substrate. Lysine 889 (proton acceptor) is an active-site residue. Lysine 891 contributes to the substrate binding site. Residues lysine 914, aspartate 916, and glutamate 917 each contribute to the Mg(2+) site. Lysine 914 is subject to N6-carboxylysine. Histidine 1010 functions as the Proton acceptor in the catalytic mechanism. Substrate-binding residues include arginine 1011, histidine 1044, and serine 1091. A propeptide spans 1209 to 1229 (LAAAFVGASTTRKASSVARRA) (linker). Substrate is bound at residue asparagine 1340. Residue lysine 1395 is the Proton acceptor of the active site. Residue lysine 1397 participates in substrate binding. Mg(2+) contacts are provided by lysine 1420, aspartate 1422, and glutamate 1423. Lysine 1420 carries the N6-carboxylysine modification. The active-site Proton acceptor is the histidine 1516. Positions 1517 and 1550 each coordinate substrate.

It belongs to the RuBisCO large chain family. Type II subfamily. Homodimer. The cofactor is Mg(2+). Post-translationally, in Western blots an approximately 220 kDa polyprotein and 2 smaller proteins of about 55 and 52 kDa are detected, suggesting the polyprotein may be cleaved at one end of the linker and then at the other end to give mature RuBisCO.

The protein resides in the plastid. It is found in the chloroplast. The enzyme catalyses 2 (2R)-3-phosphoglycerate + 2 H(+) = D-ribulose 1,5-bisphosphate + CO2 + H2O. It catalyses the reaction D-ribulose 1,5-bisphosphate + O2 = 2-phosphoglycolate + (2R)-3-phosphoglycerate + 2 H(+). Functionally, ruBisCO catalyzes two reactions: the carboxylation of D-ribulose 1,5-bisphosphate, the primary event in carbon dioxide fixation, as well as the oxidative fragmentation of the pentose substrate. Both reactions occur simultaneously and in competition at the same active site. This chain is Ribulose bisphosphate carboxylase (rbcL), found in Prorocentrum minimum (Dinoflagellate).